A 212-amino-acid polypeptide reads, in one-letter code: 3-demethoxyubiquinol 3-hydroxylase (212 aa).

Fe cation is bound by residues E61, E91, H94, E143, E175, and H178.

Belongs to the COQ7 family. Fe cation serves as cofactor.

Its subcellular location is the cell membrane. The catalysed reaction is a 5-methoxy-2-methyl-3-(all-trans-polyprenyl)benzene-1,4-diol + AH2 + O2 = a 3-demethylubiquinol + A + H2O. The protein operates within cofactor biosynthesis; ubiquinone biosynthesis. Catalyzes the hydroxylation of 2-nonaprenyl-3-methyl-6-methoxy-1,4-benzoquinol during ubiquinone biosynthesis. This is 3-demethoxyubiquinol 3-hydroxylase from Methylibium petroleiphilum (strain ATCC BAA-1232 / LMG 22953 / PM1).